Reading from the N-terminus, the 302-residue chain is Acetylglutamate kinase (302 aa).

Residues glycine 67–glycine 68, arginine 89, and asparagine 194 each bind substrate.

Belongs to the acetylglutamate kinase family. ArgB subfamily.

It localises to the cytoplasm. The catalysed reaction is N-acetyl-L-glutamate + ATP = N-acetyl-L-glutamyl 5-phosphate + ADP. It functions in the pathway amino-acid biosynthesis; L-arginine biosynthesis; N(2)-acetyl-L-ornithine from L-glutamate: step 2/4. Its function is as follows. Catalyzes the ATP-dependent phosphorylation of N-acetyl-L-glutamate. The polypeptide is Acetylglutamate kinase (Hahella chejuensis (strain KCTC 2396)).